Consider the following 554-residue polypeptide: Valerianol synthase TPS8 (554 aa).

The DDXXD motif motif lies at 288 to 292 (QHSVG). 5 residues coordinate Mg(2+): D307, D311, D452, S456, and E460.

It belongs to the terpene synthase family. It depends on Mg(2+) as a cofactor.

The enzyme catalyses (2E,6E)-farnesyl diphosphate + H2O = valerianol + diphosphate. The protein operates within secondary metabolite biosynthesis; terpenoid biosynthesis. In terms of biological role, terpene synthase that catalyzes the biosynthesis of the terpene valerianol. The polypeptide is Valerianol synthase TPS8 (Camellia sinensis (Tea plant)).